Consider the following 98-residue polypeptide: MARPKKCRQLSSCVPCSLFKPNGIPSVELTHIQLAADEFEALELGDVQRLSQLDAAALMGISRQTFGYLLASARKKVATAITQGQVLRLPSKTDKDLS.

Belongs to the UPF0251 family.

In Shewanella putrefaciens (strain CN-32 / ATCC BAA-453), this protein is UPF0251 protein Sputcn32_0687.